A 256-amino-acid chain; its full sequence is Ubiquinone/menaquinone biosynthesis C-methyltransferase UbiE (256 aa).

Over residues 1–12 (MNDQRKGDHAEP) the composition is skewed to basic and acidic residues. The disordered stretch occupies residues 1-22 (MNDQRKGDHAEPTTHFGYQDVP). Residues Thr79, Asp100, and 128-129 (DA) contribute to the S-adenosyl-L-methionine site.

It belongs to the class I-like SAM-binding methyltransferase superfamily. MenG/UbiE family.

It catalyses the reaction a 2-demethylmenaquinol + S-adenosyl-L-methionine = a menaquinol + S-adenosyl-L-homocysteine + H(+). The catalysed reaction is a 2-methoxy-6-(all-trans-polyprenyl)benzene-1,4-diol + S-adenosyl-L-methionine = a 5-methoxy-2-methyl-3-(all-trans-polyprenyl)benzene-1,4-diol + S-adenosyl-L-homocysteine + H(+). Its pathway is quinol/quinone metabolism; menaquinone biosynthesis; menaquinol from 1,4-dihydroxy-2-naphthoate: step 2/2. The protein operates within cofactor biosynthesis; ubiquinone biosynthesis. Methyltransferase required for the conversion of demethylmenaquinol (DMKH2) to menaquinol (MKH2) and the conversion of 2-polyprenyl-6-methoxy-1,4-benzoquinol (DDMQH2) to 2-polyprenyl-3-methyl-6-methoxy-1,4-benzoquinol (DMQH2). The chain is Ubiquinone/menaquinone biosynthesis C-methyltransferase UbiE from Pseudomonas putida (Arthrobacter siderocapsulatus).